The chain runs to 215 residues: Probable phosphoglycerate mutase GpmB (215 aa).

Substrate-binding positions include 8–15 (RHGETQWN), 21–22 (QG), Arg58, Lys60, 82–85 (ELDM), 104–105 (RR), and 151–152 (GI). The active-site Tele-phosphohistidine intermediate is His9. Glu82 (proton donor/acceptor) is an active-site residue.

It belongs to the phosphoglycerate mutase family. GpmB subfamily.

The catalysed reaction is (2R)-2-phosphoglycerate = (2R)-3-phosphoglycerate. The protein operates within carbohydrate degradation; glycolysis; pyruvate from D-glyceraldehyde 3-phosphate: step 3/5. This chain is Probable phosphoglycerate mutase GpmB, found in Salmonella arizonae (strain ATCC BAA-731 / CDC346-86 / RSK2980).